An 820-amino-acid polypeptide reads, in one-letter code: Leucine--tRNA ligase (820 aa).

The short motif at 40 to 51 (PYPSGAGLHVGH) is the 'HIGH' region element. Positions 601-605 (KMSKS) match the 'KMSKS' region motif. K604 provides a ligand contact to ATP.

The protein belongs to the class-I aminoacyl-tRNA synthetase family.

The protein localises to the cytoplasm. The catalysed reaction is tRNA(Leu) + L-leucine + ATP = L-leucyl-tRNA(Leu) + AMP + diphosphate. This Chlamydia felis (strain Fe/C-56) (Chlamydophila felis) protein is Leucine--tRNA ligase.